Consider the following 498-residue polypeptide: Aspartyl aminopeptidase (498 aa).

Position 91 (His91) interacts with Zn(2+). His166 contributes to the substrate binding site. Asp274 contributes to the Zn(2+) binding site. Residue Glu311 participates in substrate binding. Positions 312 and 363 each coordinate Zn(2+). Asp363, His366, Lys391, and Tyr398 together coordinate substrate. His463 contributes to the Zn(2+) binding site.

It belongs to the peptidase M18 family. Tetrahedron-shaped homododecamer built from six homodimers. It depends on Zn(2+) as a cofactor. Post-translationally, the N-terminus is blocked.

It carries out the reaction Release of an N-terminal aspartate or glutamate from a peptide, with a preference for aspartate.. Inhibited by zinc. Stimulated by calcium and bacitracin. The polypeptide is Aspartyl aminopeptidase (dapA) (Aspergillus oryzae (strain ATCC 42149 / RIB 40) (Yellow koji mold)).